Here is a 280-residue protein sequence, read N- to C-terminus: Phosphonoacetaldehyde hydrolase (280 aa).

Catalysis depends on aspartate 20, which acts as the Nucleophile. Residues aspartate 20 and alanine 22 each contribute to the Mg(2+) site. The Schiff-base intermediate with substrate role is filled by lysine 61. Aspartate 194 lines the Mg(2+) pocket.

The protein belongs to the HAD-like hydrolase superfamily. PhnX family. In terms of assembly, homodimer. Mg(2+) is required as a cofactor.

It carries out the reaction phosphonoacetaldehyde + H2O = acetaldehyde + phosphate + H(+). Involved in phosphonate degradation. This chain is Phosphonoacetaldehyde hydrolase, found in Nitratidesulfovibrio vulgaris (strain DSM 19637 / Miyazaki F) (Desulfovibrio vulgaris).